A 270-amino-acid chain; its full sequence is (+)-cis,cis-nepetalactol synthase NEPS3 (270 aa).

NAD(+) contacts are provided by residues 21–27 (GGASGIG), 46–48 (DIQ), 70–71 (DV), Asn-97, 165–169 (YVMSK), and 198–202 (VATPL).

It belongs to the short-chain dehydrogenases/reductases (SDR) family. Forms homotetramers.

The catalysed reaction is (S)-8-oxocitronellyl enol = cis-cis-nepetalactol. Functions as a non-oxidoreductive cyclase to promote the formation of cis-cis-nepetalactol. Cis-cis-nepetalactol is then oxidized by NEPS1 into cis-cis-nepetalactone, which belongs to a family of metabolites that are both insect-repellent and have euphoric effect in cats. Binds NAD(+) as classical short-chain dehydrogenase/reductase (SDR), but does not utilize it for its redox-neutral cyclase activity. The protein is (+)-cis,cis-nepetalactol synthase NEPS3 of Nepeta racemosa (Catmint).